Reading from the N-terminus, the 575-residue chain is MSSSDGGSSRVSIPYHLRKTLQKIREYTGKQHSDEDIFAVYKDSFNDPHETAQKLLFLDTFHEVRSKREKKKEPIVPVTQPSGRGGRRNFASSNSYQGSGRNASFKRENGANHVTRGSRTAQPATNKASNITVPNETKVSGPASIPSEVSNHKAQDDPSLISASRCSSKSDQAIEIETASKQGKNQSLPKPDVSEQSHVTFPFHLQVAKGLQNGLTFGSFDSNFVKEVSSSNGASGGYDSNFESSHGTGDDERESSPTTNGITGVASAREETSTVSEDKDYGISNSATGAEPVVHSDHIVPPVEEVPKEEALSNTETHQIAYGQEAPLSVFGLVPSLSAIGQPVNTEAAETQPGNSNSPPISLVSYPPDQSSIAAATQQTNFLRQQYPPNFFPYGYYSPYYMPPPYIHQFLSPNGIPQQSYFPQGAALTAPSHAKPVDNTENPPTTNPYLHTSPMVASSIPSTTTLNSIHSEEKASHLTESAAAWIGQGFGNLQVNPMYNLAYQGQPLGFPVVQAGHGGLMGMHQPTQPMAAASTTYQTLPPPPHTTTAMGEPIGHPHIAYQQPQAALTNWVNNY.

Disordered regions lie at residues 66 to 171 (SKRE…SKSD) and 229 to 296 (SSSN…VVHS). 3 stretches are compositionally biased toward polar residues: residues 90–102 (FASS…SGRN), 115–138 (TRGS…NETK), and 161–171 (ISASRCSSKSD). Basic and acidic residues predominate over residues 268 to 281 (AREETSTVSEDKDY).

Belongs to the GIP1 family. As to expression, expressed in roots, leaves, stems and flowers.

The protein localises to the nucleus. In terms of biological role, may act as a transcriptional coactivator of LOB domain-containing proteins. The polypeptide is GBF-interacting protein 1-like (Arabidopsis thaliana (Mouse-ear cress)).